The primary structure comprises 286 residues: 4-diphosphocytidyl-2-C-methyl-D-erythritol kinase (286 aa).

Residue Lys13 is part of the active site. 96 to 106 (PMGGGIGGGSS) is an ATP binding site. Asp138 is an active-site residue.

The protein belongs to the GHMP kinase family. IspE subfamily.

It carries out the reaction 4-CDP-2-C-methyl-D-erythritol + ATP = 4-CDP-2-C-methyl-D-erythritol 2-phosphate + ADP + H(+). The protein operates within isoprenoid biosynthesis; isopentenyl diphosphate biosynthesis via DXP pathway; isopentenyl diphosphate from 1-deoxy-D-xylulose 5-phosphate: step 3/6. Catalyzes the phosphorylation of the position 2 hydroxy group of 4-diphosphocytidyl-2C-methyl-D-erythritol. This is 4-diphosphocytidyl-2-C-methyl-D-erythritol kinase from Pseudoalteromonas atlantica (strain T6c / ATCC BAA-1087).